Reading from the N-terminus, the 326-residue chain is tRNA-modifying protein YgfZ (326 aa).

Folate-binding residues include Trp-27 and Trp-189.

Belongs to the tRNA-modifying YgfZ family.

Its subcellular location is the cytoplasm. In terms of biological role, folate-binding protein involved in regulating the level of ATP-DnaA and in the modification of some tRNAs. It is probably a key factor in regulatory networks that act via tRNA modification, such as initiation of chromosomal replication. The polypeptide is tRNA-modifying protein YgfZ (Escherichia coli O6:K15:H31 (strain 536 / UPEC)).